The sequence spans 132 residues: Small ribosomal subunit protein uS8 (132 aa).

Belongs to the universal ribosomal protein uS8 family. As to quaternary structure, part of the 30S ribosomal subunit. Contacts proteins S5 and S12.

One of the primary rRNA binding proteins, it binds directly to 16S rRNA central domain where it helps coordinate assembly of the platform of the 30S subunit. This is Small ribosomal subunit protein uS8 from Bifidobacterium adolescentis (strain ATCC 15703 / DSM 20083 / NCTC 11814 / E194a).